The primary structure comprises 212 residues: Uridine kinase (212 aa).

13 to 20 contributes to the ATP binding site; the sequence is GGSGSGKT.

This sequence belongs to the uridine kinase family.

It is found in the cytoplasm. The catalysed reaction is uridine + ATP = UMP + ADP + H(+). It catalyses the reaction cytidine + ATP = CMP + ADP + H(+). The protein operates within pyrimidine metabolism; CTP biosynthesis via salvage pathway; CTP from cytidine: step 1/3. It functions in the pathway pyrimidine metabolism; UMP biosynthesis via salvage pathway; UMP from uridine: step 1/1. This chain is Uridine kinase, found in Bacillus cytotoxicus (strain DSM 22905 / CIP 110041 / 391-98 / NVH 391-98).